Reading from the N-terminus, the 379-residue chain is Gonadotropin-releasing hormone II receptor (379 aa).

The Extracellular segment spans residues 1 to 40; that stretch reads MSAGNGTPWGSAAGEESWAASGVAVEGSELPTFSAAAKVR. The helical transmembrane segment at 41 to 60 threads the bilayer; it reads VGVTIVLFVSSAGGNLAVLW. At 61-76 the chain is on the cytoplasmic side; sequence SVTRPQPSQLRPSPVR. The helical transmembrane segment at 77–96 threads the bilayer; the sequence is TLFAHLAAADLLVTFVVMPL. At 97-114 the chain is on the extracellular side; the sequence is DATWNITVQWLAEDIACR. Asn101 carries N-linked (GlcNAc...) asparagine glycosylation. The cysteines at positions 113 and 188 are disulfide-linked. The chain crosses the membrane as a helical span at residues 115 to 136; that stretch reads TLMFLKLMAMYSAAFLPVVIGL. The Cytoplasmic portion of the chain corresponds to 137-160; that stretch reads DRQAAVLNPLGSRSGVRKLLGAAW. Residues 161–178 form a helical membrane-spanning segment; it reads GLSFLLALPQLFLFHTVH. At 179–204 the chain is on the extracellular side; sequence RAGPVPFTQCVTKGSFKARWQETTYN. Residues 205 to 224 form a helical membrane-spanning segment; that stretch reads LFTFRCLFLLPLTAMAICYS. The Cytoplasmic portion of the chain corresponds to 225-278; it reads HIVLSVSSPQTRKGSHAPAGEFALCRSFDNCPRVRLWALRLALLILLTFILCWT. Residues 279 to 297 traverse the membrane as a helical segment; the sequence is PYYLLGLWYWFSPTMLTEV. The Extracellular portion of the chain corresponds to 298–303; it reads PPSLSH. The helical transmembrane segment at 304–323 threads the bilayer; sequence ILFLFGLLNAPLDPLLYGAF. The Cytoplasmic portion of the chain corresponds to 324-379; it reads TLGCQRGHQELSIDSSNEGSGRMLQQEIHALRQQEVQKTVTSRSAGETKDISITSI.

It belongs to the G-protein coupled receptor 1 family. Post-translationally, phosphorylated on the C-terminal cytoplasmic tail.

It is found in the cell membrane. Functionally, receptor for gonadotropin releasing hormone II (GnRH II). This receptor mediates its action by association with G proteins that activate a phosphatidylinositol-calcium second messenger system. This is Gonadotropin-releasing hormone II receptor (GNRHR2) from Macaca mulatta (Rhesus macaque).